Here is a 549-residue protein sequence, read N- to C-terminus: Glucose-6-phosphate isomerase (549 aa).

Glu353 serves as the catalytic Proton donor. Residues His384 and Lys512 contribute to the active site.

It belongs to the GPI family.

It localises to the cytoplasm. It catalyses the reaction alpha-D-glucose 6-phosphate = beta-D-fructose 6-phosphate. It functions in the pathway carbohydrate biosynthesis; gluconeogenesis. It participates in carbohydrate degradation; glycolysis; D-glyceraldehyde 3-phosphate and glycerone phosphate from D-glucose: step 2/4. In terms of biological role, catalyzes the reversible isomerization of glucose-6-phosphate to fructose-6-phosphate. This is Glucose-6-phosphate isomerase from Alteromonas mediterranea (strain DSM 17117 / CIP 110805 / LMG 28347 / Deep ecotype).